Here is a 308-residue protein sequence, read N- to C-terminus: Prephenate dehydratase (308 aa).

Positions 3-187 constitute a Prephenate dehydratase domain; sequence RITYLGPEGT…AHTRFVLVGR (185 aa). The region spanning 201 to 278 is the ACT domain; sequence SVVLGLGNVP…EDVRYLGSWP (78 aa).

As to quaternary structure, homodimer.

The enzyme catalyses prephenate + H(+) = 3-phenylpyruvate + CO2 + H2O. It participates in amino-acid biosynthesis; L-phenylalanine biosynthesis; phenylpyruvate from prephenate: step 1/1. The sequence is that of Prephenate dehydratase (pheA) from Mycobacteroides abscessus (strain ATCC 19977 / DSM 44196 / CCUG 20993 / CIP 104536 / JCM 13569 / NCTC 13031 / TMC 1543 / L948) (Mycobacterium abscessus).